A 278-amino-acid polypeptide reads, in one-letter code: Large ribosomal subunit protein uL2 (278 aa).

2 disordered regions span residues 27–57 (STPEKSLVRPLHSKGGRNNAGRVTVRHQGGG) and 224–278 (VAMN…NKKR). The span at 258-278 (RSPKKASSKYIVRRRKTNKKR) shows a compositional bias: basic residues.

This sequence belongs to the universal ribosomal protein uL2 family. Part of the 50S ribosomal subunit. Forms a bridge to the 30S subunit in the 70S ribosome.

One of the primary rRNA binding proteins. Required for association of the 30S and 50S subunits to form the 70S ribosome, for tRNA binding and peptide bond formation. It has been suggested to have peptidyltransferase activity; this is somewhat controversial. Makes several contacts with the 16S rRNA in the 70S ribosome. The protein is Large ribosomal subunit protein uL2 of Streptomyces avermitilis (strain ATCC 31267 / DSM 46492 / JCM 5070 / NBRC 14893 / NCIMB 12804 / NRRL 8165 / MA-4680).